The following is a 614-amino-acid chain: uncharacterized protein (614 aa).

2 helical membrane-spanning segments follow: residues 494 to 516 (VAYW…GSTL) and 552 to 574 (LLIG…IVHA). The disordered stretch occupies residues 588 to 614 (AVRPRADKDIQTLTHRDEAEEDQEEDS). The span at 591–605 (PRADKDIQTLTHRDE) shows a compositional bias: basic and acidic residues.

It is found in the cell membrane. This is an uncharacterized protein from Treponema pallidum (strain Nichols).